The sequence spans 418 residues: Geranylgeranyl pyrophosphate synthase (418 aa).

Residues 51–64 are compositionally biased toward polar residues; that stretch reads TSSTGIPTSLNATP. Positions 51-73 are disordered; it reads TSSTGIPTSLNATPTKPVLRPVP. Residues lysine 143, arginine 146, and histidine 175 each coordinate isopentenyl diphosphate. 2 residues coordinate Mg(2+): aspartate 182 and aspartate 186. Arginine 191 is a dimethylallyl diphosphate binding site. Arginine 192 is a binding site for isopentenyl diphosphate. Dimethylallyl diphosphate contacts are provided by lysine 269, threonine 270, glutamine 305, lysine 322, and lysine 332.

This sequence belongs to the FPP/GGPP synthase family. Mg(2+) serves as cofactor.

It localises to the cytoplasm. The enzyme catalyses isopentenyl diphosphate + dimethylallyl diphosphate = (2E)-geranyl diphosphate + diphosphate. It carries out the reaction isopentenyl diphosphate + (2E)-geranyl diphosphate = (2E,6E)-farnesyl diphosphate + diphosphate. It catalyses the reaction isopentenyl diphosphate + (2E,6E)-farnesyl diphosphate = (2E,6E,10E)-geranylgeranyl diphosphate + diphosphate. It functions in the pathway isoprenoid biosynthesis; farnesyl diphosphate biosynthesis; farnesyl diphosphate from geranyl diphosphate and isopentenyl diphosphate: step 1/1. It participates in isoprenoid biosynthesis; geranyl diphosphate biosynthesis; geranyl diphosphate from dimethylallyl diphosphate and isopentenyl diphosphate: step 1/1. Its pathway is isoprenoid biosynthesis; geranylgeranyl diphosphate biosynthesis; geranylgeranyl diphosphate from farnesyl diphosphate and isopentenyl diphosphate: step 1/1. Functionally, catalyzes the trans-addition of the three molecules of IPP onto DMAPP to form geranylgeranyl pyrophosphate. The protein is Geranylgeranyl pyrophosphate synthase (GGS) of Fusarium fujikuroi (Bakanae and foot rot disease fungus).